The following is a 237-amino-acid chain: 1-(5-phosphoribosyl)-5-[(5-phosphoribosylamino)methylideneamino] imidazole-4-carboxamide isomerase (237 aa).

Asp-8 (proton acceptor) is an active-site residue. The Proton donor role is filled by Asp-129.

The protein belongs to the HisA/HisF family.

It localises to the cytoplasm. The enzyme catalyses 1-(5-phospho-beta-D-ribosyl)-5-[(5-phospho-beta-D-ribosylamino)methylideneamino]imidazole-4-carboxamide = 5-[(5-phospho-1-deoxy-D-ribulos-1-ylimino)methylamino]-1-(5-phospho-beta-D-ribosyl)imidazole-4-carboxamide. Its pathway is amino-acid biosynthesis; L-histidine biosynthesis; L-histidine from 5-phospho-alpha-D-ribose 1-diphosphate: step 4/9. This chain is 1-(5-phosphoribosyl)-5-[(5-phosphoribosylamino)methylideneamino] imidazole-4-carboxamide isomerase, found in Roseiflexus castenholzii (strain DSM 13941 / HLO8).